Reading from the N-terminus, the 396-residue chain is Elongation factor Tu (396 aa).

The region spanning 10–205 (KPHVNVGTIG…AVDEYIPTPE (196 aa)) is the tr-type G domain. A G1 region spans residues 19–26 (GHVDHGKT). GTP is bound at residue 19–26 (GHVDHGKT). Residue Thr-26 participates in Mg(2+) binding. The G2 stretch occupies residues 61-65 (GITIA). Residues 82–85 (DCPG) form a G3 region. Residues 82-86 (DCPGH) and 137-140 (NKTD) each bind GTP. The segment at 137-140 (NKTD) is G4. Residues 175–177 (SAL) are G5.

The protein belongs to the TRAFAC class translation factor GTPase superfamily. Classic translation factor GTPase family. EF-Tu/EF-1A subfamily. In terms of assembly, monomer.

The protein resides in the cytoplasm. The catalysed reaction is GTP + H2O = GDP + phosphate + H(+). Its function is as follows. GTP hydrolase that promotes the GTP-dependent binding of aminoacyl-tRNA to the A-site of ribosomes during protein biosynthesis. The chain is Elongation factor Tu from Salinibacter ruber (strain DSM 13855 / M31).